The primary structure comprises 568 residues: Hexose transporter 1 (568 aa).

Residues 1–32 (MATEEMREKSLKREAESLWDIPPESYASKACS) lie on the Cytoplasmic side of the membrane. The chain crosses the membrane as a helical span at residues 33–53 (CMGTAAQLVMVAVLGSFQFGF). Residues 54–86 (NLSALNTSKAFIILDFGWCKDENGGHYSDCDTG) are Extracellular-facing. Residues Cys72 and Cys83 are joined by a disulfide bond. Residues 87–107 (LVYGSLINTAVFLGACVGCLL) form a helical membrane-spanning segment. Residues 108–119 (GGRLTDFGRRAS) are Cytoplasmic-facing. Residues 120–140 (LIFTHCVCTLGCILSAAAEGF) form a helical membrane-spanning segment. Topologically, residues 141–142 (PT) are extracellular. A helical membrane pass occupies residues 143–163 (LLIARLVVGVAVGMFTVCVPM). Residues 164 to 182 (YLSEVTPDDRRGYFGTFHQ) are Cytoplasmic-facing. Gln182 serves as a coordination point for alpha-D-glucose. Gln182 contributes to the beta-D-glucose binding site. The helical transmembrane segment at 183–203 (LFITLGIFFGTLLGLAFGNAP) threads the bilayer. Topologically, residues 204 to 220 (AGDEVYEVSTFQQAWWR) are extracellular. A helical transmembrane segment spans residues 221-241 (VMLGLPAVVSLLAIWLLWFVF). Residues 242-306 (PFETPQYMVE…KAIVHPTYRS (65 aa)) are Cytoplasmic-facing. A helical transmembrane segment spans residues 307-327 (VILLACLLSIMQQFTGINVLV). Alpha-D-glucose is bound by residues Gln318, Gln319, and Asn324. Gln318 contacts beta-D-glucose. Asn324 serves as a coordination point for beta-D-glucose. Residues 328–345 (ANSNNLYSSLKLPQDAVT) lie on the Extracellular side of the membrane. Residues 346 to 366 (GLTVGFTALNVFLTVITIPLV) traverse the membrane as a helical segment. Asn355 provides a ligand contact to beta-D-glucose. Residues 367 to 374 (DRLGRRTL) lie on the Cytoplasmic side of the membrane. A helical transmembrane segment spans residues 375–395 (LLFSEAVMFVAMGIAFVANLV). At 396 to 406 (DQSNTAVQWVT) the chain is on the extracellular side. The helical transmembrane segment at 407–427 (VACVYVFIVGFAVGYGPVLWI) threads the bilayer. Position 426 (Trp426) interacts with alpha-D-glucose. The Cytoplasmic segment spans residues 428–443 (YIHEIFPPEIKQGAAS). A helical membrane pass occupies residues 444–464 (LASALNWVATVAIVLPSDFLL). The Extracellular segment spans residues 465 to 469 (KQGFS). A helical transmembrane segment spans residues 470 to 490 (VFVGICTVALAIIFVVTFIFV). Residues 491–568 (KETKGLSIEE…DDLTKGTEVV (78 aa)) are Cytoplasmic-facing.

The protein belongs to the major facilitator superfamily. Sugar transporter (TC 2.A.1.1) family. Homodimer.

It is found in the cell membrane. It catalyses the reaction D-glucose(out) = D-glucose(in). It carries out the reaction D-fructose(out) = D-fructose(in). The enzyme catalyses D-galactose(in) = D-galactose(out). The catalysed reaction is D-mannose(out) = D-mannose(in). It catalyses the reaction D-glucosamine(out) = D-glucosamine(in). It carries out the reaction D-xylose(out) = D-xylose(in). Inhibited by cytochalasin B. Sodium-independent facilitative hexose transporter. Can transport D-glucose and D-mannose with high affinity, and D-fructose and D-galactose with low affinity. Can transport D-xylose and D-glucosamine. The polypeptide is Hexose transporter 1 (Toxoplasma gondii).